A 434-amino-acid polypeptide reads, in one-letter code: MEKIIVRGGKRLNGTVRVEGAKNAVLPIIAAALLASDGKNVLSEVPVLSDVYTINEVLRHLNAEVVFENNQVTIDASKELNIEAPFEYVRKMRASVQVMGPLLARNGRARIALPGGCAIGSRPIDQHLKGFEAMGAKVQVGNGFVEAYVEGELKGAKIYLDFPSVGATENIMSAATLAKGTTILENAAKEPEIVDLANFLNAMGAKVRGAGTGTIRIEGVDKLYGANHSIIPDRIEAGTFMVAAAITGGDILIENAVPEHLRSITAKMEEMGVKIIEENEGVRVIGPDKLKAVDIKTMPHPGFPTDMQSQMMALLLQADGTSMITETVFENRFMHVEEFRRMNADIKIEGRSVIMNGPNSLQGAEVAATDLRAAAALILAGLVSEGYTRVTELKHLDRGYVNFHKKLAALGATIERVNEKVEEVKEQEVSDLHA.

22-23 serves as a coordination point for phosphoenolpyruvate; that stretch reads KN. Arg93 contributes to the UDP-N-acetyl-alpha-D-glucosamine binding site. Cys117 serves as the catalytic Proton donor. Residue Cys117 is modified to 2-(S-cysteinyl)pyruvic acid O-phosphothioketal. UDP-N-acetyl-alpha-D-glucosamine-binding positions include 122–126, Asp306, and Val328; that span reads RPIDQ.

Belongs to the EPSP synthase family. MurA subfamily.

The protein localises to the cytoplasm. The enzyme catalyses phosphoenolpyruvate + UDP-N-acetyl-alpha-D-glucosamine = UDP-N-acetyl-3-O-(1-carboxyvinyl)-alpha-D-glucosamine + phosphate. It functions in the pathway cell wall biogenesis; peptidoglycan biosynthesis. In terms of biological role, cell wall formation. Adds enolpyruvyl to UDP-N-acetylglucosamine. The chain is UDP-N-acetylglucosamine 1-carboxyvinyltransferase 1 from Bacillus cereus (strain ATCC 10987 / NRS 248).